A 274-amino-acid polypeptide reads, in one-letter code: Eukaryotic translation initiation factor 3 subunit J (274 aa).

Disordered stretches follow at residues 1 to 120 (MSGK…DLKH) and 227 to 246 (EEKA…TKTS). Residues 30 to 50 (DEEGNESDVLDSWDAAEDSEV) show a composition bias toward acidic residues. Positions 46–112 (EDSEVEREKA…AERRERLRRE (67 aa)) form a coiled coil. Basic and acidic residues-rich tracts occupy residues 51-67 (EREK…KAEA) and 79-92 (RIAE…RQLA). Over residues 93–102 (EDSDAEEETE) the composition is skewed to acidic residues. Basic and acidic residues predominate over residues 103 to 120 (AERRERLRREQKESDLKH).

Belongs to the eIF-3 subunit J family. Component of the eukaryotic translation initiation factor 3 (eIF-3) complex.

It is found in the cytoplasm. Component of the eukaryotic translation initiation factor 3 (eIF-3) complex, which is involved in protein synthesis of a specialized repertoire of mRNAs and, together with other initiation factors, stimulates binding of mRNA and methionyl-tRNAi to the 40S ribosome. The eIF-3 complex specifically targets and initiates translation of a subset of mRNAs involved in cell proliferation. This is Eukaryotic translation initiation factor 3 subunit J (hcr-1) from Neurospora crassa (strain ATCC 24698 / 74-OR23-1A / CBS 708.71 / DSM 1257 / FGSC 987).